A 522-amino-acid polypeptide reads, in one-letter code: N-acetylgalactosamine-6-sulfatase (522 aa).

Positions 1–26 (MAAVVAATRWWQLLLVLSAAGMGASG) are cleaved as a signal peptide. Residues 27–379 (APQPPNILLL…PTLLQGRLMD (353 aa)) form a catalytic domain region. The Ca(2+) site is built by aspartate 39, aspartate 40, and cysteine 79. The Nucleophile role is filled by cysteine 79. At cysteine 79 the chain carries 3-oxoalanine (Cys). The active site involves histidine 142. Asparagine 204 is a glycosylation site (N-linked (GlcNAc...) asparagine). Positions 288 and 289 each coordinate Ca(2+). A disulfide bridge links cysteine 308 with cysteine 419. Asparagine 423 carries N-linked (GlcNAc...) asparagine glycosylation. 2 cysteine pairs are disulfide-bonded: cysteine 489-cysteine 518 and cysteine 501-cysteine 507.

It belongs to the sulfatase family. In terms of assembly, homodimer. Ca(2+) is required as a cofactor. In terms of processing, the conversion to 3-oxoalanine (also known as C-formylglycine, FGly), of a serine or cysteine residue in prokaryotes and of a cysteine residue in eukaryotes, is critical for catalytic activity.

The protein resides in the lysosome. The catalysed reaction is Hydrolysis of the 6-sulfate groups of the N-acetyl-D-galactosamine 6-sulfate units of chondroitin sulfate and of the D-galactose 6-sulfate units of keratan sulfate.. The chain is N-acetylgalactosamine-6-sulfatase (GALNS) from Homo sapiens (Human).